The primary structure comprises 901 residues: Protein translocase subunit SecA (901 aa).

Residues glutamine 87, glycine 105–threonine 109, and aspartate 512 contribute to the ATP site. Zn(2+)-binding residues include cysteine 885, cysteine 887, cysteine 896, and histidine 897.

Belongs to the SecA family. In terms of assembly, monomer and homodimer. Part of the essential Sec protein translocation apparatus which comprises SecA, SecYEG and auxiliary proteins SecDF-YajC and YidC. Zn(2+) serves as cofactor.

It is found in the cell inner membrane. Its subcellular location is the cytoplasm. It catalyses the reaction ATP + H2O + cellular proteinSide 1 = ADP + phosphate + cellular proteinSide 2.. Its function is as follows. Part of the Sec protein translocase complex. Interacts with the SecYEG preprotein conducting channel. Has a central role in coupling the hydrolysis of ATP to the transfer of proteins into and across the cell membrane, serving both as a receptor for the preprotein-SecB complex and as an ATP-driven molecular motor driving the stepwise translocation of polypeptide chains across the membrane. The polypeptide is Protein translocase subunit SecA (Salmonella paratyphi A (strain ATCC 9150 / SARB42)).